Reading from the N-terminus, the 388-residue chain is Mitochondrial distribution and morphology protein 12 (388 aa).

The region spanning Met1–Leu388 is the SMP-LTD domain. 2 disordered regions span residues Asp75–Ala101 and Pro209–Ser251. A compositionally biased stretch (basic and acidic residues) spans Glu83–Ala101. The segment covering Pro234–Leu243 has biased composition (pro residues).

It belongs to the MDM12 family. As to quaternary structure, component of the ER-mitochondria encounter structure (ERMES) or MDM complex, composed of MMM1, MDM10, MDM12 and MDM34. An MMM1 homodimer associates with one molecule of MDM12 on each side in a pairwise head-to-tail manner, and the SMP-LTD domains of MMM1 and MDM12 generate a continuous hydrophobic tunnel for phospholipid trafficking.

Its subcellular location is the mitochondrion outer membrane. It localises to the endoplasmic reticulum membrane. Functionally, component of the ERMES/MDM complex, which serves as a molecular tether to connect the endoplasmic reticulum (ER) and mitochondria. Components of this complex are involved in the control of mitochondrial shape and protein biogenesis, and function in nonvesicular lipid trafficking between the ER and mitochondria. MDM12 is required for the interaction of the ER-resident membrane protein MMM1 and the outer mitochondrial membrane-resident beta-barrel protein MDM10. The MDM12-MMM1 subcomplex functions in the major beta-barrel assembly pathway that is responsible for biogenesis of all mitochondrial outer membrane beta-barrel proteins, and acts in a late step after the SAM complex. The MDM10-MDM12-MMM1 subcomplex further acts in the TOM40-specific pathway after the action of the MDM12-MMM1 complex. Essential for establishing and maintaining the structure of mitochondria and maintenance of mtDNA nucleoids. This Cryptococcus neoformans var. neoformans serotype D (strain B-3501A) (Filobasidiella neoformans) protein is Mitochondrial distribution and morphology protein 12.